A 333-amino-acid polypeptide reads, in one-letter code: MLLLPFQLLAVLFPGGNSEHAFQGPTSFHVIQTSSFTNSTWAQTQGSGWLDDLQIHGWDSDSGTAIFLKPWSKGNFSDKEVAELEEIFRVYIFGFAREVQDFAGDFQMKYPFEIQGIAGCELHSGGAIVSFLRGALGGLDFLSVKNASCVPSPEGGSRAQKFCALIIQYQGIMETVRILLYETCPRYLLGVLNAGKADLQRQVKPEAWLSSGPSPGPGRLQLVCHVSGFYPKPVWVMWMRGEQEQQGTQLGDILPNANWTWYLRATLDVADGEAAGLSCRVKHSSLEGQDIILYWRNPTSIGSIVLAIIVPSLLLLLCLALWYMRRRSYQNIP.

A signal peptide spans 1 to 17 (MLLLPFQLLAVLFPGGN). Over 18–303 (SEHAFQGPTS…YWRNPTSIGS (286 aa)) the chain is Extracellular. Asn-38, Asn-75, and Asn-146 each carry an N-linked (GlcNAc...) asparagine glycan. 3 disulfides stabilise this stretch: Cys-120/Cys-184, Cys-149/Cys-163, and Cys-224/Cys-279. The 111-residue stretch at 185 to 295 (PRYLLGVLNA…LEGQDIILYW (111 aa)) folds into the Ig-like domain. Residue Asn-258 is glycosylated (N-linked (GlcNAc...) asparagine). Residues 304 to 324 (IVLAIIVPSLLLLLCLALWYM) form a helical membrane-spanning segment. The Cytoplasmic portion of the chain corresponds to 325-333 (RRRSYQNIP). The Internalization signal signature appears at 329 to 332 (YQNI).

Heterodimer with B2M (beta-2-microglobulin). Interacts with saposin C. Expressed on cortical thymocytes, on certain T-cell leukemias, and in various other tissues.

It localises to the cell membrane. The protein localises to the endosome membrane. Its subcellular location is the lysosome membrane. Functionally, antigen-presenting protein that binds self and non-self lipid and glycolipid antigens and presents them to T-cell receptors on natural killer T-cells. The chain is T-cell surface glycoprotein CD1b (CD1B) from Homo sapiens (Human).